A 199-amino-acid chain; its full sequence is ATP-dependent Clp protease proteolytic subunit (199 aa).

The Nucleophile role is filled by S99. The active site involves H124.

It belongs to the peptidase S14 family. As to quaternary structure, fourteen ClpP subunits assemble into 2 heptameric rings which stack back to back to give a disk-like structure with a central cavity, resembling the structure of eukaryotic proteasomes.

The protein localises to the cytoplasm. The catalysed reaction is Hydrolysis of proteins to small peptides in the presence of ATP and magnesium. alpha-casein is the usual test substrate. In the absence of ATP, only oligopeptides shorter than five residues are hydrolyzed (such as succinyl-Leu-Tyr-|-NHMec, and Leu-Tyr-Leu-|-Tyr-Trp, in which cleavage of the -Tyr-|-Leu- and -Tyr-|-Trp bonds also occurs).. Cleaves peptides in various proteins in a process that requires ATP hydrolysis. Has a chymotrypsin-like activity. Plays a major role in the degradation of misfolded proteins. The protein is ATP-dependent Clp protease proteolytic subunit of Lactococcus lactis subsp. lactis (strain IL1403) (Streptococcus lactis).